A 305-amino-acid polypeptide reads, in one-letter code: Phosphoribosylaminoimidazole-succinocarboxamide synthase (305 aa).

Belongs to the SAICAR synthetase family.

The enzyme catalyses 5-amino-1-(5-phospho-D-ribosyl)imidazole-4-carboxylate + L-aspartate + ATP = (2S)-2-[5-amino-1-(5-phospho-beta-D-ribosyl)imidazole-4-carboxamido]succinate + ADP + phosphate + 2 H(+). Its pathway is purine metabolism; IMP biosynthesis via de novo pathway; 5-amino-1-(5-phospho-D-ribosyl)imidazole-4-carboxamide from 5-amino-1-(5-phospho-D-ribosyl)imidazole-4-carboxylate: step 1/2. This Tropheryma whipplei (strain Twist) (Whipple's bacillus) protein is Phosphoribosylaminoimidazole-succinocarboxamide synthase.